The primary structure comprises 282 residues: 4-hydroxy-3-methylbut-2-enyl diphosphate reductase (282 aa).

Cys-12 is a [4Fe-4S] cluster binding site. (2E)-4-hydroxy-3-methylbut-2-enyl diphosphate-binding residues include His-40 and His-72. His-40 and His-72 together coordinate dimethylallyl diphosphate. Positions 40 and 72 each coordinate isopentenyl diphosphate. Position 94 (Cys-94) interacts with [4Fe-4S] cluster. His-122 contributes to the (2E)-4-hydroxy-3-methylbut-2-enyl diphosphate binding site. Dimethylallyl diphosphate is bound at residue His-122. An isopentenyl diphosphate-binding site is contributed by His-122. The Proton donor role is filled by Glu-124. Position 160 (Thr-160) interacts with (2E)-4-hydroxy-3-methylbut-2-enyl diphosphate. Cys-188 serves as a coordination point for [4Fe-4S] cluster. Ser-216, Asn-218, and Ser-260 together coordinate (2E)-4-hydroxy-3-methylbut-2-enyl diphosphate. Dimethylallyl diphosphate contacts are provided by Ser-216, Asn-218, and Ser-260. Ser-216, Asn-218, and Ser-260 together coordinate isopentenyl diphosphate.

Belongs to the IspH family. [4Fe-4S] cluster is required as a cofactor.

The enzyme catalyses isopentenyl diphosphate + 2 oxidized [2Fe-2S]-[ferredoxin] + H2O = (2E)-4-hydroxy-3-methylbut-2-enyl diphosphate + 2 reduced [2Fe-2S]-[ferredoxin] + 2 H(+). It carries out the reaction dimethylallyl diphosphate + 2 oxidized [2Fe-2S]-[ferredoxin] + H2O = (2E)-4-hydroxy-3-methylbut-2-enyl diphosphate + 2 reduced [2Fe-2S]-[ferredoxin] + 2 H(+). The protein operates within isoprenoid biosynthesis; dimethylallyl diphosphate biosynthesis; dimethylallyl diphosphate from (2E)-4-hydroxy-3-methylbutenyl diphosphate: step 1/1. Its pathway is isoprenoid biosynthesis; isopentenyl diphosphate biosynthesis via DXP pathway; isopentenyl diphosphate from 1-deoxy-D-xylulose 5-phosphate: step 6/6. Catalyzes the conversion of 1-hydroxy-2-methyl-2-(E)-butenyl 4-diphosphate (HMBPP) into a mixture of isopentenyl diphosphate (IPP) and dimethylallyl diphosphate (DMAPP). Acts in the terminal step of the DOXP/MEP pathway for isoprenoid precursor biosynthesis. This is 4-hydroxy-3-methylbut-2-enyl diphosphate reductase from Geobacter sulfurreducens (strain ATCC 51573 / DSM 12127 / PCA).